The sequence spans 579 residues: Type II restriction enzyme FokI (579 aa).

Residues Asp-450, Asp-467, and Lys-469 contribute to the active site.

In terms of assembly, monomer, in which form it can cleave DNA. Homodimer when bound to DNA. Mg(2+) serves as cofactor.

The catalysed reaction is Endonucleolytic cleavage of DNA to give specific double-stranded fragments with terminal 5'-phosphates.. Functionally, an S subtype restriction enzyme that recognizes the asymmetric double-stranded sequence 5'-GGATG-3' and cleaves respectively 14 bases after G-1 (top strand) and 13 bases before C-1 (bottom strand). In Planomicrobium okeanokoites (Planococcus okeanokoites), this protein is Type II restriction enzyme FokI.